We begin with the raw amino-acid sequence, 538 residues long: Exo-alpha-bergamotene synthase (538 aa).

Mg(2+) is bound by residues aspartate 291, aspartate 295, aspartate 435, threonine 439, and glutamate 443. A DDXXD motif motif is present at residues 291–295 (DDIYD).

This sequence belongs to the terpene synthase family. Mg(2+) is required as a cofactor. The cofactor is Mn(2+).

It catalyses the reaction (2E,6E)-farnesyl diphosphate = (1S,5S,6R)-alpha-bergamotene + diphosphate. In terms of biological role, catalyzes a mixture of sesquiterpenoids from (2E,6E)-farnesyl diphosphate. Catalyzes the formation of exo-alpha-bergamotene, as well as (E)-nerolidol, (Z)-alpha-bisabolene, (E)-beta-farnesene and beta-sesquiphellandrene. Also has activity towards geranyl diphosphate, but to a much lesser extent. The sequence is that of Exo-alpha-bergamotene synthase from Lavandula angustifolia (Lavender).